A 545-amino-acid chain; its full sequence is Membrane protein insertase YidC (545 aa).

A helical membrane pass occupies residues 6–26; it reads FVLFVFFIFLSFLLWEQWQID. A disordered region spans residues 32–69; it reads QAVAQTDGASRPAGDLPQRPSDDESDVTVHTEAPTQEG. 4 helical membrane passes run 354-374, 425-445, 462-482, and 500-520; these read FFNN…ALFF, GGCL…WVLV, LSSK…MFIQ, and FFPL…VLYW.

Belongs to the OXA1/ALB3/YidC family. Type 1 subfamily. In terms of assembly, interacts with the Sec translocase complex via SecD. Specifically interacts with transmembrane segments of nascent integral membrane proteins during membrane integration.

The protein localises to the cell inner membrane. Required for the insertion and/or proper folding and/or complex formation of integral membrane proteins into the membrane. Involved in integration of membrane proteins that insert both dependently and independently of the Sec translocase complex, as well as at least some lipoproteins. Aids folding of multispanning membrane proteins. The protein is Membrane protein insertase YidC of Methylococcus capsulatus (strain ATCC 33009 / NCIMB 11132 / Bath).